The primary structure comprises 365 residues: Phospho-N-acetylmuramoyl-pentapeptide-transferase (365 aa).

Helical transmembrane passes span 22–42 (YISVRIIMISITSLLITLALG), 74–94 (TMGGVLILSSVIISCLLWGDL), 95–115 (TSIYLWILILVVIFFGAIGFF), 133–153 (YKFALQSIFSIVLAIVLFYLL), 168–188 (SLYIPMGIVIFVVLAFFIING), 201–221 (GLAIVPVVLVAAGLGIYAYIE), 240–260 (LAEVAVFCAAVCGSGLAFLWF), 267–287 (VFMGDVGSLTLGAVLGVIAVM), 292–312 (LIFFIMGLLFVVEALSVMLQV), and 342–362 (KVVIRFWIISLILFLIGLAAI).

This sequence belongs to the glycosyltransferase 4 family. MraY subfamily. Mg(2+) serves as cofactor.

The protein localises to the cell inner membrane. It carries out the reaction UDP-N-acetyl-alpha-D-muramoyl-L-alanyl-gamma-D-glutamyl-meso-2,6-diaminopimeloyl-D-alanyl-D-alanine + di-trans,octa-cis-undecaprenyl phosphate = di-trans,octa-cis-undecaprenyl diphospho-N-acetyl-alpha-D-muramoyl-L-alanyl-D-glutamyl-meso-2,6-diaminopimeloyl-D-alanyl-D-alanine + UMP. It participates in cell wall biogenesis; peptidoglycan biosynthesis. In terms of biological role, catalyzes the initial step of the lipid cycle reactions in the biosynthesis of the cell wall peptidoglycan: transfers peptidoglycan precursor phospho-MurNAc-pentapeptide from UDP-MurNAc-pentapeptide onto the lipid carrier undecaprenyl phosphate, yielding undecaprenyl-pyrophosphoryl-MurNAc-pentapeptide, known as lipid I. This chain is Phospho-N-acetylmuramoyl-pentapeptide-transferase, found in Francisella tularensis subsp. tularensis (strain WY96-3418).